We begin with the raw amino-acid sequence, 25 residues long: ATP-dependent 6-phosphofructokinase 2 (25 aa).

Glycine 11 lines the ATP pocket.

The protein belongs to the phosphofructokinase type A (PFKA) family. ATP-dependent PFK group I subfamily. Prokaryotic clade 'B1' sub-subfamily. As to quaternary structure, homotetramer. Requires Mg(2+) as cofactor.

The protein resides in the cytoplasm. The enzyme catalyses beta-D-fructose 6-phosphate + ATP = beta-D-fructose 1,6-bisphosphate + ADP + H(+). Its pathway is carbohydrate degradation; glycolysis; D-glyceraldehyde 3-phosphate and glycerone phosphate from D-glucose: step 3/4. Its activity is regulated as follows. In contrast with PFK1 this enzyme is not affected by phosphoenolpyruvate. Functionally, catalyzes the phosphorylation of D-fructose 6-phosphate to fructose 1,6-bisphosphate by ATP, the first committing step of glycolysis. The chain is ATP-dependent 6-phosphofructokinase 2 (pfkA2) from Thermus thermophilus (strain ATCC 27634 / DSM 579 / HB8).